A 368-amino-acid chain; its full sequence is UPF0284 protein Tery_1555 (368 aa).

The protein belongs to the UPF0284 family.

This chain is UPF0284 protein Tery_1555, found in Trichodesmium erythraeum (strain IMS101).